A 224-amino-acid chain; its full sequence is MTDDSVPPPSYEEVLRQEGVIDSPNSSNGQTSTSAGHPSSSSSTLPNYAASSLNSRPVSSSGSGNAYSQAPYPPARPTSQRPNSWQPGNASTMYASPPPSSNYNTAKPPYQTSQFYARPQSSYAPPPSGRPRISYPYPPGYMCYKCHNTGYKDSGRPCGRCARRFGRSYDVQFSRPPPGALVVYPGDPRIPGRVCGNCKGSGQLDFIFFTEICPVCNGVGKIPY.

Over residues 1-10 (MTDDSVPPPS) the composition is skewed to pro residues. Residues 1–110 (MTDDSVPPPS…SNYNTAKPPY (110 aa)) form a disordered region. Positions 31–52 (TSTSAGHPSSSSSTLPNYAASS) are enriched in low complexity. Composition is skewed to polar residues over residues 53–68 (LNSR…NAYS), 77–94 (PTSQ…STMY), and 101–110 (SNYNTAKPPY).

This sequence belongs to the HUA1 family.

The protein localises to the cytoplasm. In terms of biological role, may be involved in assembly and disassembly of the actin cytoskeleton. The chain is Proline/serine-rich protein C17A5.10 from Schizosaccharomyces pombe (strain 972 / ATCC 24843) (Fission yeast).